The sequence spans 216 residues: Protein YabP (216 aa).

The protein is Protein YabP (yabP) of Escherichia coli (strain K12).